Reading from the N-terminus, the 320-residue chain is Tetraacyldisaccharide 4'-kinase (320 aa).

53–60 (SVGGNGKT) is a binding site for ATP.

Belongs to the LpxK family.

The enzyme catalyses a lipid A disaccharide + ATP = a lipid IVA + ADP + H(+). Its pathway is glycolipid biosynthesis; lipid IV(A) biosynthesis; lipid IV(A) from (3R)-3-hydroxytetradecanoyl-[acyl-carrier-protein] and UDP-N-acetyl-alpha-D-glucosamine: step 6/6. In terms of biological role, transfers the gamma-phosphate of ATP to the 4'-position of a tetraacyldisaccharide 1-phosphate intermediate (termed DS-1-P) to form tetraacyldisaccharide 1,4'-bis-phosphate (lipid IVA). The chain is Tetraacyldisaccharide 4'-kinase from Psychromonas ingrahamii (strain DSM 17664 / CCUG 51855 / 37).